Consider the following 192-residue polypeptide: Adenylate kinase (192 aa).

10-18 contacts ATP; sequence GVPGVGKTT.

It belongs to the archaeal adenylate kinase family.

The protein resides in the cytoplasm. It catalyses the reaction AMP + ATP = 2 ADP. This is Adenylate kinase from Methanoculleus marisnigri (strain ATCC 35101 / DSM 1498 / JR1).